Reading from the N-terminus, the 1392-residue chain is DNA-directed RNA polymerase subunit beta (1392 aa).

The protein belongs to the RNA polymerase beta chain family. In terms of assembly, the RNAP catalytic core consists of 2 alpha, 1 beta, 1 beta' and 1 omega subunit. When a sigma factor is associated with the core the holoenzyme is formed, which can initiate transcription.

It carries out the reaction RNA(n) + a ribonucleoside 5'-triphosphate = RNA(n+1) + diphosphate. Its function is as follows. DNA-dependent RNA polymerase catalyzes the transcription of DNA into RNA using the four ribonucleoside triphosphates as substrates. This chain is DNA-directed RNA polymerase subunit beta, found in Neisseria meningitidis serogroup B (strain ATCC BAA-335 / MC58).